The sequence spans 279 residues: Dehydrogenase/reductase SDR family member 4 (279 aa).

37–61 (LVTASTDGIGLAIARRLAEDGAHVV) provides a ligand contact to NADP(+). An N6-acetyllysine; alternate modification is found at K93. K93 is modified (N6-succinyllysine; alternate). Position 106 is an N6-acetyllysine (K106). Substrate is bound at residue S170. Residue Y183 is the Proton acceptor of the active site. K187 is a binding site for NADP(+). K217 carries the post-translational modification N6-acetyllysine; alternate. Residue K217 is modified to N6-succinyllysine; alternate. The residue at position 221 (S221) is a Phosphoserine. N6-succinyllysine occurs at positions 228 and 235. The Peroxisomal targeting signal motif lies at 277-279 (SRL).

The protein belongs to the short-chain dehydrogenases/reductases (SDR) family. As to quaternary structure, homotetramer.

It is found in the peroxisome. It carries out the reaction a secondary alcohol + NADP(+) = a ketone + NADPH + H(+). It catalyses the reaction 3alpha-hydroxy-5beta-pregnan-20-one + NADP(+) = 5beta-pregnan-3,20-dione + NADPH + H(+). The enzyme catalyses 5beta-dihydrotestosterone + NADPH + H(+) = 5beta-androstane-3alpha,17beta-diol + NADP(+). The catalysed reaction is all-trans-retinol + NADP(+) = all-trans-retinal + NADPH + H(+). It carries out the reaction isatin + NADPH + H(+) = 3-hydroxyindolin-2-one + NADP(+). NADPH-dependent oxidoreductase which catalyzes the reduction of a variety of compounds bearing carbonyl groups including ketosteroids, alpha-dicarbonyl compounds, aldehydes, aromatic ketones and quinones. Reduces all-trans-retinal and 9-cis retinal. Reduces 3-ketosteroids and benzil into 3alpha-hydroxysteroids and S-benzoin, respectively, in contrast to the stereoselectivity of primates DHRS4s which produce 3beta-hydroxysteroids and R-benzoin. In the reverse reaction, catalyzes the NADP-dependent oxidation of 3alpha-hydroxysteroids and alcohol, but with much lower efficiency. Involved in the metabolism of 3alpha-hydroxysteroids, retinoid, isatin and xenobiotic carbonyl compounds. The chain is Dehydrogenase/reductase SDR family member 4 (Dhrs4) from Rattus norvegicus (Rat).